Consider the following 434-residue polypeptide: Arrestin domain-containing protein 1 (434 aa).

Residues 292 to 349 (SPCPGRESSPGTLSLVVPSAPPQEEAEAVASGPHFSDPVSLSTKSHSQQQPLSAPLGS) are disordered. Positions 330–343 (VSLSTKSHSQQQPL) are enriched in polar residues. 2 short sequence motifs (PPxY motif) span residues 401–404 (PPEY) and 414–417 (PPSY).

It belongs to the arrestin family. Interacts (via PPxY motifs) with ITCH (via WW domains); the interaction is direct and participates in the recruitment of the ubiquitin-protein ligase ITCH to the NOTCH1 receptor. Interacts with ARRB1 and ARRB2; the interaction is direct. Interacts with TSG101; may recruit TSG101 to the plasma membrane. Interacts (via PPxY motifs) with WWP2 (via WW domains); ubiquitinates ARRDC1. Interacts with SLC11A2; controls the incorporation of SLC11A2 into extracellular vesicles through an ubiquitination-dependent mechanism. Interacts with WWP1 (via WW domains). Interacts with NEDD4 (via WW domains). Interacts with PDCD6IP. Post-translationally, ubiquitinated. Ubiquitination by WWP2; promotes localization to extracellular microvesicles. Ubiquitinated by WWP1.

It localises to the cell membrane. Functionally, functions as an adapter recruiting ubiquitin-protein ligases to their specific substrates. Through an ubiquitination-dependent mechanism plays for instance a role in the incorporation of SLC11A2 into extracellular vesicles. More generally, plays a role in the extracellular transport of proteins between cells through the release in the extracellular space of microvesicles. By participating to the ITCH-mediated ubiquitination and subsequent degradation of NOTCH1, negatively regulates the NOTCH signaling pathway. The chain is Arrestin domain-containing protein 1 from Mus musculus (Mouse).